A 379-amino-acid polypeptide reads, in one-letter code: MYNIKQSTDTKEAAAIEARRNREKERQNRFFNVRNRVMGVDVQALNNQVGDRKRREAAERSKEAAYGTSQVQYDVVVQMLEKEEADRTRQLAKKVQEFREQKQQLKNGREFSLWDPGQVWKGLPTYLSYSNTYPGPASLQYFSGEDLDRDTRLRMQQGQFRYNLERQQQEQQQAKVDENYTDALSNQLRLAMDAQATHLARLEESCRAAMMCAMANANKAQAAVQAGRQRCERQREQKANLAEIQHQSTSDLLTENPQVAQHPMAPYRVLPYCWKGMTPEQQAAIRKEQEVQRSKKQAHRQAEKTLDTEWKSQTMSSAQAVLELEEQERELCAVFQRGLGSFNQQLANEQKAQQDYLNSVIYTNQPTAQYHQQFNTSSR.

A disordered region spans residues 1 to 21 (MYNIKQSTDTKEAAAIEARRN). Residues 8–21 (TDTKEAAAIEARRN) are compositionally biased toward basic and acidic residues. Coiled-coil stretches lie at residues 82–111 (KEEA…GREF) and 216–304 (NANK…QAEK).

This sequence belongs to the RIB43A family. In terms of assembly, microtubule inner protein component of sperm flagellar doublet microtubules.

The protein resides in the cytoplasm. Its subcellular location is the cytoskeleton. It localises to the flagellum axoneme. This Homo sapiens (Human) protein is RIB43A-like with coiled-coils protein 1 (RIBC1).